The chain runs to 286 residues: 4-diphosphocytidyl-2-C-methyl-D-erythritol kinase (286 aa).

K13 is an active-site residue. Position 99-109 (99-109 (PMGGGLGGGSS)) interacts with ATP. D141 is an active-site residue.

Belongs to the GHMP kinase family. IspE subfamily.

The catalysed reaction is 4-CDP-2-C-methyl-D-erythritol + ATP = 4-CDP-2-C-methyl-D-erythritol 2-phosphate + ADP + H(+). Its pathway is isoprenoid biosynthesis; isopentenyl diphosphate biosynthesis via DXP pathway; isopentenyl diphosphate from 1-deoxy-D-xylulose 5-phosphate: step 3/6. Its function is as follows. Catalyzes the phosphorylation of the position 2 hydroxy group of 4-diphosphocytidyl-2C-methyl-D-erythritol. The polypeptide is 4-diphosphocytidyl-2-C-methyl-D-erythritol kinase (Herminiimonas arsenicoxydans).